Reading from the N-terminus, the 343-residue chain is Cysteine proteinase 1 (343 aa).

The signal sequence occupies residues 1-18 (MKVILLFVLAVFTVFVSS). Positions 19 to 117 (RGIPLEEQSQ…DYLDDEFINS (99 aa)) are cleaved as a propeptide — activation peptide. Cystine bridges form between cysteine 139–cysteine 190, cysteine 173–cysteine 224, and cysteine 279–cysteine 332. Cysteine 142 is an active-site residue. Residues histidine 286 and asparagine 311 contribute to the active site.

Belongs to the peptidase C1 family. Phosphoglycosylated, contains GlcNAc-alpha-1-P-Ser residues.

It localises to the lysosome. Its function is as follows. Cysteine proteinases 1 and 2 are believed to participate in the breakdown of protein during differentiation of Dictyostelium as a response to starvation. The chain is Cysteine proteinase 1 (cprA) from Dictyostelium discoideum (Social amoeba).